Consider the following 404-residue polypeptide: Zinc finger TRAF-type-containing protein 1 (404 aa).

Over residues 1-13 the composition is skewed to gly residues; sequence MSGAEEAGGGGPA. Positions 1 to 22 are disordered; that stretch reads MSGAEEAGGGGPAAGPAGSVPA. The RING-type; degenerate zinc-finger motif lies at 111–156; sequence CTVCLDLPKASVYQCTNGHLMCAGCFIHLLADARLKEEQATCPNCR. The segment at 152 to 225 adopts a TRAF-type zinc-finger fold; sequence CPNCRCEISK…PWHGPFHELT (74 aa).

This sequence belongs to the ZFTRAF1 family. Interacts with LGALS3.

Its subcellular location is the cytoplasm. The protein localises to the perinuclear region. This is Zinc finger TRAF-type-containing protein 1 from Homo sapiens (Human).